Consider the following 130-residue polypeptide: Small ribosomal subunit protein uS8 (130 aa).

Belongs to the universal ribosomal protein uS8 family. As to quaternary structure, part of the 30S ribosomal subunit. Contacts proteins S5 and S12.

In terms of biological role, one of the primary rRNA binding proteins, it binds directly to 16S rRNA central domain where it helps coordinate assembly of the platform of the 30S subunit. The protein is Small ribosomal subunit protein uS8 of Idiomarina loihiensis (strain ATCC BAA-735 / DSM 15497 / L2-TR).